Reading from the N-terminus, the 934-residue chain is Protein unc-45 homolog B (934 aa).

TPR repeat units follow at residues 9–42 (SVQL…CKKE), 48–81 (AVIY…DAAD), and 83–115 (KALY…EPKN). 3 ARM repeats span residues 174–213 (DAGA…GMCT), 216–255 (RARA…CVND), and 753–792 (DKLR…NLVC).

In terms of assembly, interacts with apobec2a, apobec2b, hsp90a.1, hsp90a.2, hsp90ab1 and myosin. Expressed in striated muscle tissue including somites, heart and craniofacial muscle. Detected in mesoderm adjacent to the dorsal midline during the late gastrula stages and in somitic mesoderm during development of trunk skeletal muscle. Also expressed in cranial skeletal muscle and in cardiac and smooth muscle. Detected in somitic muscle and heart primordium of 24 hour embryos. At later stages, expressed in muscles of pectoral fins, jaw, branchial arches and eye.

Its subcellular location is the cytoplasm. The protein resides in the myofibril. It localises to the sarcomere. The protein localises to the z line. It is found in the a band. Its subcellular location is the perinuclear region. Its function is as follows. Acts as a co-chaperone for HSP90 and is required for proper folding of the myosin motor domain. Plays a role in sarcomere formation during muscle cell development. Required for myoseptal integrity, myofiber attachment, motility and craniofacial development. Is necessary for normal early lens development. The protein is Protein unc-45 homolog B of Danio rerio (Zebrafish).